The sequence spans 396 residues: MVLRFITSGESHGKGLIGIVEQMPAGVEIGEEDINRELQRRQKGYGRGGRMKIESDRVEIFSGIRNGYSLGTPISYLIRNQDFENWQEIMATGECKRHEEKIVNRPRPGHADLAGAMKYNQSDMRNILERASARETAARVAAGAMFKKLLESFNIRVYSQVKSIGPVQVKTWQVNEQNWQDLREKVDESPLHSVDTEKEPLMREAIDQARSKGESLGGSFEVGVIGVPPGLGSYISWESRLDSQICALLMSIPAIKAAEIGEGIANSAEPGSRVHDEIFYSEEGGLHRKSNRAGGIEGGISNGETVWARAYMKPIPTLYKPLTSVNTKLWQEEKADIERSDICAVPAAAIVGESMLAFAIARAFLEKFSGDSLDEIRKSYTTYQAYLKRVWKWEKI.

Residues arginine 41 and arginine 47 each contribute to the NADP(+) site. Residues 130–132 (RAS), glycine 298, 313–317 (KPIPT), and arginine 339 contribute to the FMN site.

The protein belongs to the chorismate synthase family. Homotetramer. The cofactor is FMNH2.

The enzyme catalyses 5-O-(1-carboxyvinyl)-3-phosphoshikimate = chorismate + phosphate. It participates in metabolic intermediate biosynthesis; chorismate biosynthesis; chorismate from D-erythrose 4-phosphate and phosphoenolpyruvate: step 7/7. Its function is as follows. Catalyzes the anti-1,4-elimination of the C-3 phosphate and the C-6 proR hydrogen from 5-enolpyruvylshikimate-3-phosphate (EPSP) to yield chorismate, which is the branch point compound that serves as the starting substrate for the three terminal pathways of aromatic amino acid biosynthesis. This reaction introduces a second double bond into the aromatic ring system. This chain is Chorismate synthase, found in Syntrophomonas wolfei subsp. wolfei (strain DSM 2245B / Goettingen).